We begin with the raw amino-acid sequence, 385 residues long: MEEEFKVTPWEVEGIIDYNKLIEQFGTSPLTDDLLERTARLTKSELPIFFRRKFFFSHRDYDKVLDDYEQGKGFFLYTGRGPSGPMHIGHIIPFFATKWLQEKFDVNLYIQITDDEKFLFKENLTFEDTKYWAYQNILDIIAVGFDPDKTFIFQNSEFTKIYEMAIPIAKKINFSMAKAVFGFTEQSKIGMIFFPAIQAAPTFFEKKRCLIPAAIDQDPYWRLQRDFAESLGYYKTAALHSKFFPPLTGLEGKMSASKPETAIYLTDNPEEAGKKIWKFALTGGQPTLKEQREKGGNPEKCVVFKWLEIFFEPDDKKLMERYYACKNGELLCGECKRYLIQRVQEFLKEHQEKRKKAEKLVEKFKYTGKLAQEQWNKAIPDPLKK.

Positions 82–90 (PSGPMHIGH) match the 'HIGH' region motif. The 'KMSKS' region signature appears at 253–257 (KMSAS).

The protein belongs to the class-I aminoacyl-tRNA synthetase family.

It localises to the cytoplasm. It catalyses the reaction tRNA(Trp) + L-tryptophan + ATP = L-tryptophyl-tRNA(Trp) + AMP + diphosphate + H(+). The sequence is that of Tryptophan--tRNA ligase from Pyrococcus furiosus (strain ATCC 43587 / DSM 3638 / JCM 8422 / Vc1).